Consider the following 237-residue polypeptide: Phosphoribosylaminoimidazole-succinocarboxamide synthase (237 aa).

Belongs to the SAICAR synthetase family.

The enzyme catalyses 5-amino-1-(5-phospho-D-ribosyl)imidazole-4-carboxylate + L-aspartate + ATP = (2S)-2-[5-amino-1-(5-phospho-beta-D-ribosyl)imidazole-4-carboxamido]succinate + ADP + phosphate + 2 H(+). It participates in purine metabolism; IMP biosynthesis via de novo pathway; 5-amino-1-(5-phospho-D-ribosyl)imidazole-4-carboxamide from 5-amino-1-(5-phospho-D-ribosyl)imidazole-4-carboxylate: step 1/2. This Campylobacter fetus subsp. fetus (strain 82-40) protein is Phosphoribosylaminoimidazole-succinocarboxamide synthase.